The chain runs to 305 residues: UDP-3-O-acyl-N-acetylglucosamine deacetylase (305 aa).

Zn(2+) contacts are provided by His-79, His-238, and Asp-242. His-265 acts as the Proton donor in catalysis.

It belongs to the LpxC family. Requires Zn(2+) as cofactor.

The catalysed reaction is a UDP-3-O-[(3R)-3-hydroxyacyl]-N-acetyl-alpha-D-glucosamine + H2O = a UDP-3-O-[(3R)-3-hydroxyacyl]-alpha-D-glucosamine + acetate. The protein operates within glycolipid biosynthesis; lipid IV(A) biosynthesis; lipid IV(A) from (3R)-3-hydroxytetradecanoyl-[acyl-carrier-protein] and UDP-N-acetyl-alpha-D-glucosamine: step 2/6. Its function is as follows. Catalyzes the hydrolysis of UDP-3-O-myristoyl-N-acetylglucosamine to form UDP-3-O-myristoylglucosamine and acetate, the committed step in lipid A biosynthesis. The chain is UDP-3-O-acyl-N-acetylglucosamine deacetylase from Salmonella agona (strain SL483).